The following is a 270-amino-acid chain: uncharacterized protein (270 aa).

2 disordered regions span residues 1–21 (MSTN…YEKP) and 53–77 (PNIL…AKLN). The segment covering 58–75 (SKHDGDKNKNDKKKEDAK) has biased composition (basic and acidic residues). Residues 182–270 (EENKSREEKH…KIEDNLNTYE (89 aa)) are a coiled coil.

This is an uncharacterized protein from Plasmodium falciparum (isolate 3D7).